Reading from the N-terminus, the 308-residue chain is Aspartate carbamoyltransferase catalytic subunit (308 aa).

Carbamoyl phosphate is bound by residues Arg57 and Thr58. Position 86 (Lys86) interacts with L-aspartate. Residues Arg107, His135, and Gln138 each contribute to the carbamoyl phosphate site. Arg168 and Arg229 together coordinate L-aspartate. Leu268 and Pro269 together coordinate carbamoyl phosphate.

The protein belongs to the aspartate/ornithine carbamoyltransferase superfamily. ATCase family. Heterooligomer of catalytic and regulatory chains.

The enzyme catalyses carbamoyl phosphate + L-aspartate = N-carbamoyl-L-aspartate + phosphate + H(+). The protein operates within pyrimidine metabolism; UMP biosynthesis via de novo pathway; (S)-dihydroorotate from bicarbonate: step 2/3. Functionally, catalyzes the condensation of carbamoyl phosphate and aspartate to form carbamoyl aspartate and inorganic phosphate, the committed step in the de novo pyrimidine nucleotide biosynthesis pathway. This chain is Aspartate carbamoyltransferase catalytic subunit, found in Thermococcus gammatolerans (strain DSM 15229 / JCM 11827 / EJ3).